The sequence spans 77 residues: U14-theraphotoxin-Cg1a 3 (77 aa).

The N-terminal stretch at 1–21 (MKTSVLLVILGIAAITVQCTA) is a signal peptide. A propeptide spanning residues 22–49 (SESVEQDSLRTFVDTVLGWNAEMASEAR) is cleaved from the precursor. 3 disulfides stabilise this stretch: Cys50–Cys64, Cys57–Cys69, and Cys63–Cys75. Lysine amide is present on Lys77.

The protein belongs to the neurotoxin 10 (Hwtx-1) family. 65 (Jztx-21) subfamily. In terms of tissue distribution, expressed by the venom gland.

It localises to the secreted. Probable ion channel inhibitor. The protein is U14-theraphotoxin-Cg1a 3 of Chilobrachys guangxiensis (Chinese earth tiger tarantula).